Reading from the N-terminus, the 326-residue chain is Pantothenate kinase (326 aa).

ATP is bound at residue G104–S111.

The protein belongs to the prokaryotic pantothenate kinase family.

The protein localises to the cytoplasm. It carries out the reaction (R)-pantothenate + ATP = (R)-4'-phosphopantothenate + ADP + H(+). The protein operates within cofactor biosynthesis; coenzyme A biosynthesis; CoA from (R)-pantothenate: step 1/5. The sequence is that of Pantothenate kinase from Parvibaculum lavamentivorans (strain DS-1 / DSM 13023 / NCIMB 13966).